A 426-amino-acid chain; its full sequence is Serine hydroxymethyltransferase (426 aa).

(6S)-5,6,7,8-tetrahydrofolate is bound by residues leucine 113 and 117-119 (GHL). Lysine 222 is subject to N6-(pyridoxal phosphate)lysine. 363-365 (SAF) is a (6S)-5,6,7,8-tetrahydrofolate binding site.

Belongs to the SHMT family. As to quaternary structure, homodimer. It depends on pyridoxal 5'-phosphate as a cofactor.

Its subcellular location is the cytoplasm. It catalyses the reaction (6R)-5,10-methylene-5,6,7,8-tetrahydrofolate + glycine + H2O = (6S)-5,6,7,8-tetrahydrofolate + L-serine. Its pathway is one-carbon metabolism; tetrahydrofolate interconversion. It participates in amino-acid biosynthesis; glycine biosynthesis; glycine from L-serine: step 1/1. Functionally, catalyzes the reversible interconversion of serine and glycine with tetrahydrofolate (THF) serving as the one-carbon carrier. This reaction serves as the major source of one-carbon groups required for the biosynthesis of purines, thymidylate, methionine, and other important biomolecules. Also exhibits THF-independent aldolase activity toward beta-hydroxyamino acids, producing glycine and aldehydes, via a retro-aldol mechanism. The protein is Serine hydroxymethyltransferase of Porphyromonas gingivalis (strain ATCC 33277 / DSM 20709 / CIP 103683 / JCM 12257 / NCTC 11834 / 2561).